A 164-amino-acid chain; its full sequence is Shikimate kinase (164 aa).

10-15 (GVGKTT) serves as a coordination point for ATP. T14 lines the Mg(2+) pocket. Substrate is bound by residues D28, R52, and G75. R116 contributes to the ATP binding site. Substrate is bound at residue R134. Residue R151 participates in ATP binding.

This sequence belongs to the shikimate kinase family. In terms of assembly, monomer. Mg(2+) is required as a cofactor.

The protein localises to the cytoplasm. It catalyses the reaction shikimate + ATP = 3-phosphoshikimate + ADP + H(+). It functions in the pathway metabolic intermediate biosynthesis; chorismate biosynthesis; chorismate from D-erythrose 4-phosphate and phosphoenolpyruvate: step 5/7. Catalyzes the specific phosphorylation of the 3-hydroxyl group of shikimic acid using ATP as a cosubstrate. This is Shikimate kinase from Streptococcus equi subsp. zooepidemicus (strain MGCS10565).